Consider the following 330-residue polypeptide: 2-phospho-L-lactate transferase (330 aa).

Asp-49 is a 7,8-didemethyl-8-hydroxy-5-deazariboflavin binding site.

This sequence belongs to the CofD family. As to quaternary structure, homodimer. It depends on Mg(2+) as a cofactor.

It carries out the reaction (2S)-lactyl-2-diphospho-5'-guanosine + 7,8-didemethyl-8-hydroxy-5-deazariboflavin = oxidized coenzyme F420-0 + GMP + H(+). The protein operates within cofactor biosynthesis; coenzyme F420 biosynthesis. Catalyzes the transfer of the 2-phospholactate moiety from (2S)-lactyl-2-diphospho-5'-guanosine to 7,8-didemethyl-8-hydroxy-5-deazariboflavin (FO) with the formation of oxidized coenzyme F420-0 and GMP. In Haloarcula marismortui (strain ATCC 43049 / DSM 3752 / JCM 8966 / VKM B-1809) (Halobacterium marismortui), this protein is 2-phospho-L-lactate transferase.